A 45-amino-acid chain; its full sequence is Large ribosomal subunit protein bL36 (45 aa).

The tract at residues 1-45 is disordered; sequence MKVSSSIKADPSKGDKLVRRKGRLYVINKKDPNRKQRQAGPARKK.

The protein belongs to the bacterial ribosomal protein bL36 family.

The polypeptide is Large ribosomal subunit protein bL36 (Chlamydia caviae (strain ATCC VR-813 / DSM 19441 / 03DC25 / GPIC) (Chlamydophila caviae)).